A 119-amino-acid chain; its full sequence is Holo-[acyl-carrier-protein] synthase (119 aa).

Residues Asp5 and Glu51 each coordinate Mg(2+).

This sequence belongs to the P-Pant transferase superfamily. AcpS family. Mg(2+) is required as a cofactor.

It localises to the cytoplasm. It catalyses the reaction apo-[ACP] + CoA = holo-[ACP] + adenosine 3',5'-bisphosphate + H(+). Its function is as follows. Transfers the 4'-phosphopantetheine moiety from coenzyme A to a Ser of acyl-carrier-protein. The sequence is that of Holo-[acyl-carrier-protein] synthase from Helicobacter pylori (strain J99 / ATCC 700824) (Campylobacter pylori J99).